Here is a 510-residue protein sequence, read N- to C-terminus: Fumarate hydratase, mitochondrial (510 aa).

The N-terminal 44 residues, 1–44 (MYRALWLLARSRRLVRPPASALASAPGLSGAAVPSFWPPNAARM), are a transit peptide targeting the mitochondrion. N6-acetyllysine; alternate occurs at positions 61, 66, and 80. N6-succinyllysine; alternate occurs at positions 61, 66, and 80. Residues threonine 85 and threonine 90 each carry the phosphothreonine modification. Lysine 94 bears the N6-acetyllysine mark. Lysine 115 and lysine 122 each carry N6-acetyllysine; alternate. N6-succinyllysine; alternate occurs at positions 115 and 122. Residues 145–147 (SGT), 176–179 (HPND), and 186–188 (SSN) contribute to the substrate site. Lysine 213 is modified (N6-acetyllysine). Residue lysine 223 is modified to N6-acetyllysine; alternate. Lysine 223 is subject to N6-succinyllysine; alternate. Substrate is bound at residue threonine 234. Histidine 235 functions as the Proton donor/acceptor in the catalytic mechanism. Threonine 236 is modified (phosphothreonine). Lysine 256 carries the N6-acetyllysine modification. Lysine 292 bears the N6-acetyllysine; alternate mark. The residue at position 292 (lysine 292) is an N6-succinyllysine; alternate. Serine 365 is an active-site residue. Substrate-binding positions include serine 366 and 371-373 (KVN). Position 366 is a phosphoserine (serine 366). N6-succinyllysine occurs at positions 467 and 473. Lysine 502 carries the post-translational modification N6-acetyllysine.

It belongs to the class-II fumarase/aspartase family. Fumarase subfamily. In terms of assembly, homotetramer. Interacts with H2AZ1. In terms of processing, phosphorylation at Thr-236 by PRKDC in response to DNA damage promotes translocation to the nucleus and recruitment to DNA double-strand breaks (DSBs).

It is found in the mitochondrion. The protein localises to the cytoplasm. It localises to the cytosol. The protein resides in the nucleus. Its subcellular location is the chromosome. The catalysed reaction is (S)-malate = fumarate + H2O. It participates in carbohydrate metabolism; tricarboxylic acid cycle; (S)-malate from fumarate: step 1/1. In terms of biological role, catalyzes the reversible stereospecific interconversion of fumarate to L-malate. Experiments in other species have demonstrated that specific isoforms of this protein act in defined pathways and favor one direction over the other. Functionally, catalyzes the hydration of fumarate to L-malate in the tricarboxylic acid (TCA) cycle to facilitate a transition step in the production of energy in the form of NADH. Its function is as follows. Catalyzes the dehydration of L-malate to fumarate. Fumarate metabolism in the cytosol plays a role during urea cycle and arginine metabolism; fumarate being a by-product of the urea cycle and amino-acid catabolism. Also plays a role in DNA repair by promoting non-homologous end-joining (NHEJ). In response to DNA damage and phosphorylation by PRKDC, translocates to the nucleus and accumulates at DNA double-strand breaks (DSBs): acts by catalyzing formation of fumarate, an inhibitor of KDM2B histone demethylase activity, resulting in enhanced dimethylation of histone H3 'Lys-36' (H3K36me2). The polypeptide is Fumarate hydratase, mitochondrial (Macaca fascicularis (Crab-eating macaque)).